Consider the following 522-residue polypeptide: Light-independent protochlorophyllide reductase subunit B (522 aa).

Residue D36 coordinates [4Fe-4S] cluster. The active-site Proton donor is D274. 409 to 410 (GL) provides a ligand contact to substrate. Positions 426–464 (DEAGPSHHGGKAVPASAPRAEATADEGSTPEEAVPPVAA) are disordered. The segment covering 455 to 464 (PEEAVPPVAA) has biased composition (low complexity).

It belongs to the ChlB/BchB/BchZ family. As to quaternary structure, protochlorophyllide reductase is composed of three subunits; BchL, BchN and BchB. Forms a heterotetramer of two BchB and two BchN subunits. It depends on [4Fe-4S] cluster as a cofactor.

It carries out the reaction chlorophyllide a + oxidized 2[4Fe-4S]-[ferredoxin] + 2 ADP + 2 phosphate = protochlorophyllide a + reduced 2[4Fe-4S]-[ferredoxin] + 2 ATP + 2 H2O. The protein operates within porphyrin-containing compound metabolism; bacteriochlorophyll biosynthesis (light-independent). Its function is as follows. Component of the dark-operative protochlorophyllide reductase (DPOR) that uses Mg-ATP and reduced ferredoxin to reduce ring D of protochlorophyllide (Pchlide) to form chlorophyllide a (Chlide). This reaction is light-independent. The NB-protein (BchN-BchB) is the catalytic component of the complex. The polypeptide is Light-independent protochlorophyllide reductase subunit B (Cereibacter sphaeroides (strain ATCC 17025 / ATH 2.4.3) (Rhodobacter sphaeroides)).